A 319-amino-acid chain; its full sequence is 4-diphosphocytidyl-2-C-methyl-D-erythritol kinase (319 aa).

Residue Lys21 is part of the active site. ATP is bound at residue 106-116; sequence PIGAGLAGGSS. Asp148 is a catalytic residue.

Belongs to the GHMP kinase family. IspE subfamily.

The catalysed reaction is 4-CDP-2-C-methyl-D-erythritol + ATP = 4-CDP-2-C-methyl-D-erythritol 2-phosphate + ADP + H(+). It participates in isoprenoid biosynthesis; isopentenyl diphosphate biosynthesis via DXP pathway; isopentenyl diphosphate from 1-deoxy-D-xylulose 5-phosphate: step 3/6. Functionally, catalyzes the phosphorylation of the position 2 hydroxy group of 4-diphosphocytidyl-2C-methyl-D-erythritol. The chain is 4-diphosphocytidyl-2-C-methyl-D-erythritol kinase from Prochlorococcus marinus (strain SARG / CCMP1375 / SS120).